A 1849-amino-acid chain; its full sequence is Breast cancer type 1 susceptibility protein homolog (1849 aa).

Met1 bears the N-acetylmethionine mark. The RING-type zinc finger occupies 24–65 (CPICLELIKEPVSTKCDHIFCKFCMLKLLNQKKGPSQCPLCK). Residue Ser114 is modified to Phosphoserine. Glycyl lysine isopeptide (Lys-Gly) (interchain with G-Cter in SUMO2) cross-links involve residues Lys301 and Lys339. Residues Ser395, Ser398, Ser423, and Ser434 each carry the phosphoserine modification. Residues Lys457 and Lys517 each participate in a glycyl lysine isopeptide (Lys-Gly) (interchain with G-Cter in SUMO2) cross-link. Residues 530–542 (KMTEGTDQTEQKC) are compositionally biased toward basic and acidic residues. 2 disordered regions span residues 530–558 (KMTEGTDQTEQKCHGMNITSDGHENKTKR) and 620–662 (ELEL…RQSQ). Residues Ser691, Ser711, and Ser720 each carry the phosphoserine modification. The segment at 882-912 (SGSLRDQSPRDPLKCRQKEDSQGKSESKSQH) is disordered. Positions 888–910 (QSPRDPLKCRQKEDSQGKSESKS) are enriched in basic and acidic residues. Lys981 is covalently cross-linked (Glycyl lysine isopeptide (Lys-Gly) (interchain with G-Cter in SUMO2)). Ser982 carries the phosphoserine; by CHEK2 modification. Ser1002 is modified (phosphoserine). Over residues 1036 to 1061 (NSVNEVGSSTNEVGSSVNEVGSSGEN) the composition is skewed to low complexity. The interval 1036 to 1070 (NSVNEVGSSTNEVGSSVNEVGSSGENIQAEPGRNR) is disordered. Lys1073 participates in a covalent cross-link: Glycyl lysine isopeptide (Lys-Gly) (interchain with G-Cter in SUMO2). 9 positions are modified to phosphoserine: Ser1138, Ser1184, Ser1211, Ser1212, Ser1274, Ser1323, Ser1330, Ser1336, and Ser1382. The disordered stretch occupies residues 1172 to 1211 (FSESVQKGEFRGSPGPFTHTHLAQGHQRGAGKLESEETVS). Disordered regions lie at residues 1321-1389 (YQSE…ILTT), 1412-1433 (VLERHGSQPSHSSASLTADSRG), and 1452-1493 (SEKS…RSSA). Positions 1336–1360 (SDDEERETGLEEDSCQEEQSVDSDL) are enriched in acidic residues. Composition is skewed to polar residues over residues 1370–1389 (ETSLSEDGVGLSSQSDILTT) and 1418–1429 (SQPSHSSASLTA). Thr1389 carries the post-translational modification Phosphothreonine. Residues 1392–1419 (RDTMQDNLLKLQQEMAELEAVLERHGSQ) are interaction with PALB2. Phosphoserine occurs at positions 1418, 1452, and 1518. 2 disordered regions span residues 1562-1590 (SLFSHEPESDPSEDRAAEPAHVHSMPPSA) and 1621-1640 (REESMSKEKPEVISSTERSK). Basic and acidic residues-rich tracts occupy residues 1566–1582 (HEPESDPSEDRAAEPAH) and 1621–1631 (REESMSKEKPE). 2 BRCT domains span residues 1642–1729 (RLSM…DFEV) and 1749–1848 (RDKK…TYLV).

In terms of assembly, heterodimer with BARD1. Part of the BRCA1-associated genome surveillance complex (BASC), which contains BRCA1, MSH2, MSH6, MLH1, ATM, BLM, PMS2 and the MRE11-RAD50-NBN protein (MRN) complex. This association could be a dynamic process changing throughout the cell cycle and within subnuclear domains. Component of the BRCA1-A complex, at least composed of BRCA1, BARD1, UIMC1/RAP80, ABRAXAS1, BRCC3/BRCC36, BABAM2 and BABAM1/NBA1. Interacts (via the BRCT domains) with ABRAXAS1 (phosphorylated form); this is important for recruitment to sites of DNA damage. Can form a heterotetramer with two molecules of ABRAXAS1 (phosphorylated form). Component of the BRCA1-RBBP8 complex. Interacts (via the BRCT domains) with RBBP8 ('Ser-327' phosphorylated form); the interaction ubiquitinates RBBP8, regulates CHEK1 activation, and involves RBBP8 in BRCA1-dependent G2/M checkpoint control on DNA damage. Associates with RNA polymerase II holoenzyme. Interacts with SMC1A, NELFB, DCLRE1C, CLSPN. CHEK1, CHEK2, BAP1, BRCC3, UBXN1 and PCLAF. Interacts (via BRCT domains) with BRIP1 (phosphorylated form). Interacts with FANCD2 (ubiquitinated form). Interacts with H2AX (phosphorylated on 'Ser-140'). Interacts (via the BRCT domains) with ACACA (phosphorylated form); the interaction prevents dephosphorylation of ACACA. Part of a BRCA complex containing BRCA1, BRCA2 and PALB2. Interacts directly with PALB2; the interaction is essential for its function in HRR. Interacts directly with BRCA2; the interaction occurs only in the presence of PALB2 which serves as the bridging protein. Interacts (via the BRCT domains) with LMO4; the interaction represses the transcriptional activity of BRCA1. Interacts (via the BRCT domains) with CCAR2 (via N-terminus); the interaction represses the transcriptional activator activity of BRCA1. Interacts with EXD2. Interacts (via C-terminus) with DHX9; this interaction is direct and links BRCA1 to the RNA polymerase II holoenzyme. Interacts with DNA helicase ZGRF1; the interaction is increased following DNA damage induction. In terms of processing, phosphorylated in response to IR, UV, and various stimuli that cause checkpoint activation, probably by ATM or ATR. Phosphorylation at Ser-982 by CHEK2 regulates mitotic spindle assembly. Phosphorylation by AURKA regulates centrosomal microtubule nucleation. Post-translationally, autoubiquitinated, undergoes 'Lys-6'-linked polyubiquitination. 'Lys-6'-linked polyubiquitination does not promote degradation.

The protein resides in the nucleus. It localises to the chromosome. It is found in the cytoplasm. The enzyme catalyses S-ubiquitinyl-[E2 ubiquitin-conjugating enzyme]-L-cysteine + [acceptor protein]-L-lysine = [E2 ubiquitin-conjugating enzyme]-L-cysteine + N(6)-ubiquitinyl-[acceptor protein]-L-lysine.. It functions in the pathway protein modification; protein ubiquitination. Functionally, E3 ubiquitin-protein ligase that specifically mediates the formation of 'Lys-6'-linked polyubiquitin chains and plays a central role in DNA repair by facilitating cellular responses to DNA damage. It is unclear whether it also mediates the formation of other types of polyubiquitin chains. The BRCA1-BARD1 heterodimer coordinates a diverse range of cellular pathways such as DNA damage repair, ubiquitination and transcriptional regulation to maintain genomic stability. Regulates centrosomal microtubule nucleation. Required for appropriate cell cycle arrests after ionizing irradiation in both the S-phase and the G2 phase of the cell cycle. Required for FANCD2 targeting to sites of DNA damage. Inhibits lipid synthesis by binding to inactive phosphorylated ACACA and preventing its dephosphorylation. Contributes to homologous recombination repair (HRR) via its direct interaction with PALB2, fine-tunes recombinational repair partly through its modulatory role in the PALB2-dependent loading of BRCA2-RAD51 repair machinery at DNA breaks. Component of the BRCA1-RBBP8 complex which regulates CHEK1 activation and controls cell cycle G2/M checkpoints on DNA damage via BRCA1-mediated ubiquitination of RBBP8. Acts as a transcriptional activator. This Bos taurus (Bovine) protein is Breast cancer type 1 susceptibility protein homolog (BRCA1).